We begin with the raw amino-acid sequence, 745 residues long: Ribosomal protein S6 kinase alpha-6 (745 aa).

The interval Met-1–Val-28 is disordered. Positions Phe-73–Phe-330 constitute a Protein kinase 1 domain. Residues Leu-79–Val-87 and Lys-105 each bind ATP. Asp-198 (proton acceptor) is an active-site residue. Phosphoserine is present on residues Ser-232, Ser-372, and Ser-389. The AGC-kinase C-terminal domain maps to Ala-331 to Lys-400. Residues Tyr-426 to Ile-683 enclose the Protein kinase 2 domain. ATP-binding positions include Ile-432–Cys-440 and Lys-455. Catalysis depends on Asp-543, which acts as the Proton acceptor. Thr-581 is subject to Phosphothreonine.

The protein belongs to the protein kinase superfamily. AGC Ser/Thr protein kinase family. S6 kinase subfamily. Forms a complex with MAPK3/ERK1 but not with MAPK9 or MAPK14 in serum-starved cells. It depends on Mg(2+) as a cofactor. Phosphorylated at Ser-232, Ser-372, and Ser-389 in serum-starved cells.

It localises to the cytoplasm. Its subcellular location is the cytosol. It is found in the nucleus. The enzyme catalyses L-seryl-[protein] + ATP = O-phospho-L-seryl-[protein] + ADP + H(+). It carries out the reaction L-threonyl-[protein] + ATP = O-phospho-L-threonyl-[protein] + ADP + H(+). Constitutively activated by phosphorylation at Ser-232, Ser-372, and Ser-389 in serum-starved cells. Does not require growth factor stimulation for significant kinase activity. In terms of biological role, constitutively active serine/threonine-protein kinase that exhibits growth-factor-independent kinase activity and that may participate in p53/TP53-dependent cell growth arrest signaling and play an inhibitory role during embryogenesis. The chain is Ribosomal protein S6 kinase alpha-6 (RPS6KA6) from Homo sapiens (Human).